We begin with the raw amino-acid sequence, 432 residues long: Repulsive guidance molecule A (432 aa).

The signal sequence occupies residues 1–29; it reads MGRGAGSTALGLFQILPVFLCIFPPVTSP. The propeptide at 30–149 is removed in mature form; it reads CKILKCNSEF…NYTHCGLFGD (120 aa). An N-linked (GlcNAc...) asparagine glycan is attached at N96. Positions 99–122 are disordered; that stretch reads KDGPTSQPRLRTLPPGDSQERSDS. 2 disulfide bridges follow: C126–C207 and C144–C296. N-linked (GlcNAc...) asparagine glycosylation is present at N140. N404 carries the GPI-anchor amidated asparagine lipid modification. A propeptide spans 405 to 432 (removed in mature form); it reads AAPSEHPWALPALWVALLSLSQCWLGLL.

Belongs to the repulsive guidance molecule (RGM) family. In terms of processing, autocatalytically cleaved at low pH; the two chains remain linked via two disulfide bonds.

The protein localises to the cell membrane. Acts as an axon-specific repulsive guidance molecule in the retinotectal system. Repulsive for a subset of axons of the temporal half of the retina. Provides thus positional information for the temporal axons invading the optic tectum in the stratum opticum. The protein is Repulsive guidance molecule A (RGMA) of Gallus gallus (Chicken).